Reading from the N-terminus, the 710-residue chain is ATP-dependent RNA helicase DBP7 (710 aa).

Residues M1–A97 are disordered. The segment covering N11 to A21 has biased composition (polar residues). Positions P54–E68 are enriched in low complexity. The short motif at D134–K163 is the Q motif element. Residues P167 to I361 form the Helicase ATP-binding domain. A180 to T187 lines the ATP pocket. A DEAD box motif is present at residues D296–D299. In terms of domain architecture, Helicase C-terminal spans A396 to V588. The disordered stretch occupies residues P669–R690.

Belongs to the DEAD box helicase family. DDX31/DBP7 subfamily.

The protein resides in the nucleus. It is found in the nucleolus. It catalyses the reaction ATP + H2O = ADP + phosphate + H(+). ATP-binding RNA helicase involved in the biogenesis of 60S ribosomal subunits and is required for the normal formation of 25S and 5.8S rRNAs. The protein is ATP-dependent RNA helicase DBP7 (DBP7) of Eremothecium gossypii (strain ATCC 10895 / CBS 109.51 / FGSC 9923 / NRRL Y-1056) (Yeast).